A 273-amino-acid polypeptide reads, in one-letter code: MTTSQLQTEQHQVSDDTAISIQNVTISYGSYEAVKNVYCDVPRGKVTAFIGPSGCGKSTVLRALNRMNDLIEGCSLKGRVLFDGVDLYGASVDPVEVRRRIGMVFQQPNPFPKSIYENIAFGARINGFTGDMDELVERSLRQAAVWDECKDKLNESGYSLSGGQQQRLCIARTIAIQPEVILMDEPCSALDPISTLKIEETMHELKKSFTIVIVTHNMQQAVRVSDMTAFYNAEAVEGGSGKVGYLVEFNETEKIFNSPQQQATQDYVSGRFG.

Residues 19-258 (ISIQNVTISY…FNETEKIFNS (240 aa)) enclose the ABC transporter domain. An ATP-binding site is contributed by 51 to 58 (GPSGCGKS).

This sequence belongs to the ABC transporter superfamily. Phosphate importer (TC 3.A.1.7) family. As to quaternary structure, the complex is composed of two ATP-binding proteins (PstB), two transmembrane proteins (PstC and PstA) and a solute-binding protein (PstS).

Its subcellular location is the cell inner membrane. The catalysed reaction is phosphate(out) + ATP + H2O = ADP + 2 phosphate(in) + H(+). In terms of biological role, part of the ABC transporter complex PstSACB involved in phosphate import. Responsible for energy coupling to the transport system. The protein is Phosphate import ATP-binding protein PstB of Parasynechococcus marenigrum (strain WH8102).